We begin with the raw amino-acid sequence, 28 residues long: Venom protein (28 aa).

Residues Lys1 to Ala28 are disordered. Residues Asp19 to Ala28 show a composition bias toward polar residues.

Expressed by the venom gland.

It localises to the secreted. Causes symptoms of mild intoxication and transient paralysis in insects (A.domestica). This chain is Venom protein, found in Rhopalurus junceus (Caribbean blue scorpion).